A 105-amino-acid polypeptide reads, in one-letter code: Met repressor (105 aa).

It belongs to the MetJ family. As to quaternary structure, homodimer.

Its subcellular location is the cytoplasm. This regulatory protein, when combined with SAM (S-adenosylmethionine) represses the expression of the methionine regulon and of enzymes involved in SAM synthesis. This is Met repressor from Hamiltonella defensa subsp. Acyrthosiphon pisum (strain 5AT).